Here is a 274-residue protein sequence, read N- to C-terminus: Formamidopyrimidine-DNA glycosylase (274 aa).

P2 (schiff-base intermediate with DNA) is an active-site residue. The active-site Proton donor is E3. Residue K58 is the Proton donor; for beta-elimination activity of the active site. Positions 91, 110, and 152 each coordinate DNA. Residues 237–271 form an FPG-type zinc finger; sequence KVYGRKNLPCLVCENKIETVVIAGRHSAFCPHCQP. The Proton donor; for delta-elimination activity role is filled by R261.

This sequence belongs to the FPG family. As to quaternary structure, monomer. It depends on Zn(2+) as a cofactor.

It catalyses the reaction Hydrolysis of DNA containing ring-opened 7-methylguanine residues, releasing 2,6-diamino-4-hydroxy-5-(N-methyl)formamidopyrimidine.. It carries out the reaction 2'-deoxyribonucleotide-(2'-deoxyribose 5'-phosphate)-2'-deoxyribonucleotide-DNA = a 3'-end 2'-deoxyribonucleotide-(2,3-dehydro-2,3-deoxyribose 5'-phosphate)-DNA + a 5'-end 5'-phospho-2'-deoxyribonucleoside-DNA + H(+). Its function is as follows. Involved in base excision repair of DNA damaged by oxidation or by mutagenic agents. Acts as a DNA glycosylase that recognizes and removes damaged bases. Has a preference for oxidized purines, such as 7,8-dihydro-8-oxoguanine (8-oxoG). Has AP (apurinic/apyrimidinic) lyase activity and introduces nicks in the DNA strand. Cleaves the DNA backbone by beta-delta elimination to generate a single-strand break at the site of the removed base with both 3'- and 5'-phosphates. The chain is Formamidopyrimidine-DNA glycosylase from Legionella pneumophila subsp. pneumophila (strain Philadelphia 1 / ATCC 33152 / DSM 7513).